Consider the following 176-residue polypeptide: Calcium and integrin-binding family member 2 (176 aa).

3 EF-hand domains span residues 55 to 90, 92 to 127, and 133 to 168; these read RENP…LCES, PRDL…LTKS, and EVVL…APDF. Ca(2+)-binding residues include D105, N107, D109, D116, D146, D148, D150, K152, and D157.

In terms of assembly, monomer. Homodimer. Interacts with WHRN and MYO7A. Interacts with ITGA2B (via C-terminus cytoplasmic tail region); the interactions are stabilized/increased in a calcium and magnesium-dependent manner. Interacts with ITGA7 (via C-terminus cytoplasmic tail region); the interactions are stabilized/increased in a calcium and magnesium-dependent manner. Interacts with TMC1. Interacts with TMC2. Expressed in liver, heart, kidney, brain, spleen, stomach, ovary, testis and muscle.

The protein resides in the cytoplasm. The protein localises to the cell projection. It is found in the stereocilium. It localises to the photoreceptor inner segment. Its subcellular location is the cilium. The protein resides in the photoreceptor outer segment. The protein localises to the cell membrane. It is found in the sarcolemma. Calcium- and integrin-binding protein that plays a role in intracellular calcium homeostasis. Acts as an auxiliary subunit of the sensory mechanoelectrical transduction (MET) channel in hair cells. Essential for mechanoelectrical transduction (MET) currents in auditory hair cells and thereby required for hearing. Regulates the function of hair cell mechanotransduction by controlling the distribution of transmembrane channel-like proteins TMC1 and TMC2, and by regulating the function of the MET channels in hair cells. Required for the maintenance of auditory hair cell stereocilia bundle morphology and function and for hair-cell survival in the cochlea. Critical for proper photoreceptor cell maintenance and function. Plays a role in intracellular calcium homeostasis by decreasing ATP-induced calcium release. The sequence is that of Calcium and integrin-binding family member 2 (CIB2) from Ovis aries (Sheep).